A 169-amino-acid chain; its full sequence is Disulfide bond formation protein B (169 aa).

Residues 1–14 (MMRFLNHCSQGRSA) are Cytoplasmic-facing. Residues 15 to 31 (WLLMILTALILESSALY) traverse the membrane as a helical segment. Residues 32–49 (FQHVMKLQPCVMCIYERV) lie on the Periplasmic side of the membrane. Cysteines 41 and 44 form a disulfide. Residues 50–65 (ALFGVLSAGILGVIAP) traverse the membrane as a helical segment. The Cytoplasmic portion of the chain corresponds to 66-71 (KTPLRW). Residues 72-89 (LAIILWIYSAWGGLQLAW) traverse the membrane as a helical segment. The Periplasmic portion of the chain corresponds to 90 to 144 (QHTMMQLHPSPFNTCDFFVNFPSWLALNQWLPSVFEATGDCSVRQWQFLTLEMPQ). Cysteines 104 and 130 form a disulfide. A helical transmembrane segment spans residues 145 to 163 (WLVGIFAAYLVVAALVLIS). Topologically, residues 164 to 169 (QFFSRK) are cytoplasmic.

The protein belongs to the DsbB family.

The protein localises to the cell inner membrane. Its function is as follows. Required for disulfide bond formation in some periplasmic proteins. Acts by oxidizing the DsbA protein. The protein is Disulfide bond formation protein B of Photorhabdus laumondii subsp. laumondii (strain DSM 15139 / CIP 105565 / TT01) (Photorhabdus luminescens subsp. laumondii).